Reading from the N-terminus, the 518-residue chain is MERNIIVLDTTLRDGEQVPGAKLNVQQKIEFAQQLKRLNVDIIEAGFPASSAGDFQAVQEIARTVGDSVSITALARAVKGDIDAVYESIKLAQNPLIHIVLGTSNIHVEKKFNRSKDAVLQMGVDAVKYAKTLLPQVQYSTEDASRSDFEYLWKTIEAVVKAGATMINVPDTVGYAVPDEFGELIRKINERLKNLNDQVILSVHCHNDLGLATANTLSAVRNGAEKVECTINGLGERAGNTSLEEVVMGLKVRENHFKASTNVRLKELIRTSRLLTHLTGLDVQVNKAITGENAFAHSSGIHQDGLLKDKQVYEIMSPEEVGADSMELILTARSGRHAFKNAVEKLGFETGEGDDFEALFEKFLLLADAKKEVYDHDVFYLVTQHRTHEEVSSHLYELDSFQVVTNDMYPTATVKLKKGSETFRDSMVGDGPIDALYSAIKALVGLDVQLKDYKINSLSRGKEAIGRVNIRIEYQGKIYSGRAMDTDIIKASALAFLNGINAVLLDAGHDSQAPVSAR.

A Pyruvate carboxyltransferase domain is found at 5–269 (IIVLDTTLRD…STNVRLKELI (265 aa)). Residues aspartate 14, histidine 204, histidine 206, and asparagine 240 each coordinate Mn(2+). The tract at residues 397–518 (ELDSFQVVTN…HDSQAPVSAR (122 aa)) is regulatory domain.

It belongs to the alpha-IPM synthase/homocitrate synthase family. LeuA type 1 subfamily. In terms of assembly, homodimer. Mn(2+) is required as a cofactor.

It is found in the cytoplasm. It catalyses the reaction 3-methyl-2-oxobutanoate + acetyl-CoA + H2O = (2S)-2-isopropylmalate + CoA + H(+). The protein operates within amino-acid biosynthesis; L-leucine biosynthesis; L-leucine from 3-methyl-2-oxobutanoate: step 1/4. Catalyzes the condensation of the acetyl group of acetyl-CoA with 3-methyl-2-oxobutanoate (2-ketoisovalerate) to form 3-carboxy-3-hydroxy-4-methylpentanoate (2-isopropylmalate). In Geobacillus sp. (strain Y412MC10), this protein is 2-isopropylmalate synthase.